The sequence spans 155 residues: Ribosomal RNA large subunit methyltransferase H (155 aa).

Residues Leu72, Gly103, and 122-127 (LSDLTL) contribute to the S-adenosyl-L-methionine site.

Belongs to the RNA methyltransferase RlmH family. As to quaternary structure, homodimer.

The protein localises to the cytoplasm. It carries out the reaction pseudouridine(1915) in 23S rRNA + S-adenosyl-L-methionine = N(3)-methylpseudouridine(1915) in 23S rRNA + S-adenosyl-L-homocysteine + H(+). In terms of biological role, specifically methylates the pseudouridine at position 1915 (m3Psi1915) in 23S rRNA. This is Ribosomal RNA large subunit methyltransferase H from Delftia acidovorans (strain DSM 14801 / SPH-1).